Reading from the N-terminus, the 87-residue chain is Exendin-4 (87 aa).

Positions 1-23 (MKIILWLCVFGLFLATLFPISWQ) are cleaved as a signal peptide. A propeptide spanning residues 24–45 (MPVESGLSSEDSASSESFASKI) is cleaved from the precursor. At Ser-86 the chain carries Serine amide.

The protein belongs to the glucagon family. As to expression, expressed by the venom gland.

It localises to the secreted. In terms of biological role, venom protein that mimics the incretin hormone glucagon-like peptide 1 (GLP-1). It stimulates insulin synthesis and secretion, protects against beta-cell apoptosis in response to different insults, and promotes beta-cell proliferation It also promotes satiety, reduces food intake, reduces fat deposition, reduces body weight and inhibits gastric emptying. Interacts with GLP-1 receptor (GLP1R). Induces hypotension that is mediated by relaxation of cardiac smooth muscle. The sequence is that of Exendin-4 from Heloderma suspectum cinctum (Banded Gila monster).